An 80-amino-acid chain; its full sequence is Saposin-B-Val (80 aa).

The 80-residue stretch at 1 to 80 folds into the Saposin B-type domain; it reads GDVCQDCIQM…CGLVGFCEEV (80 aa). 3 cysteine pairs are disulfide-bonded: Cys-4–Cys-77, Cys-7–Cys-71, and Cys-36–Cys-47. Asn-21 is a glycosylation site (N-linked (GlcNAc...) (complex) asparagine).

In terms of assembly, saposin-B is a homodimer. Interacts with GRN; facilitates lysosomal delivery of progranulin from the extracellular space and the biosynthetic pathway. The one residue extended Saposin-B-Val is only found in a minority of the chains.

Saposin-B stimulates the hydrolysis of galacto-cerebroside sulfate by arylsulfatase A (EC 3.1.6.8), GM1 gangliosides by beta-galactosidase (EC 3.2.1.23) and globotriaosylceramide by alpha-galactosidase A (EC 3.2.1.22). Saposin-B forms a solubilizing complex with the substrates of the sphingolipid hydrolases. This is Saposin-B-Val (PSAP) from Sus scrofa (Pig).